Reading from the N-terminus, the 690-residue chain is Protein MODIFIED TRANSPORT TO THE VACUOLE 1 (690 aa).

Residues 20 to 150 form the VHS domain; sequence VTSDEDKVAP…PESINRRIEG (131 aa). 2 disordered regions span residues 228 to 258 and 518 to 551; these read DGNY…SVRV and FSID…HQAP. Low complexity predominate over residues 243-257; the sequence is GHASGEASESSASVR. Over residues 520–536 the composition is skewed to polar residues; that stretch reads IDENNSNQKGSSSSTLP.

As to quaternary structure, binds to clathrin heavy chain. As to expression, expressed in inflorescence stems, stigmas, roots, roots meristems, embryos, and floral and leaf vasculatures, but absent from the floral abscission zone.

It is found in the golgi apparatus. Its subcellular location is the trans-Golgi network. The protein localises to the cytoplasmic vesicle. It localises to the clathrin-coated vesicle. In terms of biological role, mediates clathrin-dependent trafficking of vacuolar cargo from the trans-Golgi network (TGN). Promotes plant growth. The sequence is that of Protein MODIFIED TRANSPORT TO THE VACUOLE 1 from Arabidopsis thaliana (Mouse-ear cress).